The chain runs to 1136 residues: Nuclear pore complex protein Nup133 (1136 aa).

Positions 1-26 are disordered; the sequence is MFSPRGTPGSGRRQAPRTGGRRSVSA.

This sequence belongs to the nucleoporin Nup133 family. In terms of assembly, forms part of the Nup160 subcomplex in the nuclear pore which is composed of NUP160, NUP133, NUP107 and Nup96. This complex plays a role in RNA export and in tethering Nup98 and NUP153 to the nucleus. In terms of tissue distribution, widely expressed in the embryo and in adult tissues. Higher expression is observed in the brain, testes, ovary, skin, and kidney.

It is found in the nucleus. The protein localises to the nuclear pore complex. The protein resides in the chromosome. Its subcellular location is the centromere. It localises to the kinetochore. Its function is as follows. Involved in poly(A)+ RNA transport. Involved in nephrogenesis. The chain is Nuclear pore complex protein Nup133 from Danio rerio (Zebrafish).